A 442-amino-acid chain; its full sequence is Syndecan-3 (442 aa).

Disordered regions lie at residues 1–25 (MKPGPPRRGTAQGQRVDTATHGPGA) and 55–85 (RPVDLEGSGDDDSFPDDELDDLYSGSGSGYF). Residues 1–44 (MKPGPPRRGTAQGQRVDTATHGPGARGLLLPPLLLLLLAGRAAG) form the signal peptide. Residues 45-387 (AQRWRNENFE…SILERKEVLV (343 aa)) lie on the Extracellular side of the membrane. Over residues 61–75 (GSGDDDSFPDDELDD) the composition is skewed to acidic residues. 4 O-linked (Xyl...) (glycosaminoglycan) serine glycosylation sites follow: Ser-78, Ser-80, Ser-82, and Ser-89. O-linked (GalNAc) threonine; by GALNT13 glycosylation is present at Thr-107. Disordered stretches follow at residues 151–175 (EEPSQRATTISTTTSTTAATTTGAP), 180–199 (APATAATTAPSTPAAPPATA), 225–244 (ATTPAVPSPPTTVTTLDTEA), 252–327 (TATS…TTQP), and 339–372 (AAAKPSPPLGTLPKGARPGLGLHDNAIDSGSSAA). The segment covering 157–175 (ATTISTTTSTTAATTTGAP) has biased composition (low complexity). Residue Ser-161 is glycosylated (O-linked (GalNAc) serine; by GALNT13). Residues Thr-162, Thr-163, Thr-170, and Thr-172 are each glycosylated (O-linked (GalNAc) threonine; by GALNT13). Low complexity predominate over residues 276-287 (TLPLGTTAPGPT). Over residues 289 to 303 (VAQTPTPESLLTTTQ) the composition is skewed to polar residues. O-linked (Xyl...) (glycosaminoglycan) serine glycans are attached at residues Ser-315 and Ser-367. The helical transmembrane segment at 388–408 (AVIVGGVVGALFAAFLVTLLI) threads the bilayer. Phosphotyrosine occurs at positions 409, 419, 431, and 441. The Cytoplasmic portion of the chain corresponds to 409 to 442 (YRMKKKDEGSYTLEEPKQASVTYQKPDKQEEFYA). The disordered stretch occupies residues 419-442 (YTLEEPKQASVTYQKPDKQEEFYA). The segment covering 433 to 442 (KPDKQEEFYA) has biased composition (basic and acidic residues).

Belongs to the syndecan proteoglycan family. Interacts with TIAM1. Interacts (via heparan sulfate chains) with PTN; this interaction mediates the neurite outgrowth-promoting signal from PTN to the cytoskeleton of growing neurites; this interaction mediates osteoblast recruitment. Interacts with MDK; this interaction induces SDC3 clustering; this interaction induces neuronal cell adhesion and neurite outgrowth. Post-translationally, O-glycosylated within the Thr/Ser-rich region which could interact with lectin domains on other molecules. High levels in neonatal brain, heart, and Schwann cells, barely detectable in neonatal or adult liver, or adult brain.

The protein localises to the cell membrane. Cell surface proteoglycan that may bear heparan sulfate. May have a role in the organization of cell shape by affecting the actin cytoskeleton, possibly by transferring signals from the cell surface in a sugar-dependent mechanism. The polypeptide is Syndecan-3 (Sdc3) (Rattus norvegicus (Rat)).